A 200-amino-acid chain; its full sequence is Small ribosomal subunit protein mS26 (200 aa).

The N-terminal 27 residues, 1 to 27 (MLRALNRLAARPETRPPTPLLLPVRGR), are a transit peptide targeting the mitochondrion. A disordered region spans residues 1 to 44 (MLRALNRLAARPETRPPTPLLLPVRGRKTRHDPPAKSKVGRVQT). An N6-acetyllysine modification is found at lysine 159.

Belongs to the mitochondrion-specific ribosomal protein mS26 family. As to quaternary structure, component of the mitochondrial ribosome small subunit (28S) which comprises a 12S rRNA and about 30 distinct proteins.

It localises to the mitochondrion. The sequence is that of Small ribosomal subunit protein mS26 (Mrps26) from Mus musculus (Mouse).